The following is a 562-amino-acid chain: Solute carrier family 22 member 6 (562 aa).

Topologically, residues 1-15 (MPFSELLEQVGSTGR) are cytoplasmic. Residues 16–36 (FQVLHVTLLCIPVLMMASHNL) traverse the membrane as a helical segment. The Extracellular segment spans residues 37 to 147 (LQNFVATVPS…LVCDMHSFKQ (111 aa)). A helical membrane pass occupies residues 148–168 (MGQTIYMGGVLVGALLFGGLS). The Cytoplasmic portion of the chain corresponds to 169–174 (DRYGRR). Residues 175-195 (ILLLISNLLMAVSGTCAAFSS) traverse the membrane as a helical segment. The Extracellular portion of the chain corresponds to 196 to 205 (SFSLFCVFRF). Residues 206-226 (GCGLALSGLGLNTFSLIVEWI) traverse the membrane as a helical segment. At 227–235 (PTRIRTAVG) the chain is on the cytoplasmic side. A helical membrane pass occupies residues 236 to 256 (TTTGYCYTLGQLILVLLAYFI). Residues 257-260 (RDWR) lie on the Extracellular side of the membrane. Residues 261–281 (WLTLAVSLPFYVFFLIAWWFH) form a helical membrane-spanning segment. At 282 to 351 (ESSRWLALSN…FNTPAMRKRT (70 aa)) the chain is on the cytoplasmic side. Residues 352 to 372 (LCLSAVWLSTSFAYYGLAMDL) form a helical membrane-spanning segment. At 373–378 (DKFGVD) the chain is on the extracellular side. A helical membrane pass occupies residues 379 to 399 (IYLIQVIFGAVDIPAKVVVVV). Residues 400–408 (SMSLIGRRR) are Cytoplasmic-facing. A helical transmembrane segment spans residues 409-429 (SQCAVLVVAGITILLNLLVPY). The Extracellular portion of the chain corresponds to 430–444 (DKQTIRTCLAVLGKG). The chain crosses the membrane as a helical span at residues 445 to 465 (CLAASFNCCYLYSGELFPTII). Residues 466–468 (RQN) are Cytoplasmic-facing. The chain crosses the membrane as a helical span at residues 469 to 489 (GMGWVSMMARIGAMVAPMVLL). At 490 to 495 (TRDYIP) the chain is on the extracellular side. Residues 496 to 516 (WLPGLIYGGAPILSGLAAIFL) traverse the membrane as a helical segment. At 517 to 562 (PETLGYPLPDTIQDVEESGSGRKSKMSTKETITLQDKQANLLKQSA) the chain is on the cytoplasmic side.

It belongs to the major facilitator (TC 2.A.1) superfamily. Organic cation transporter (TC 2.A.1.19) family. Glycosylated. Glycosylation is necessary for proper targeting of the transporter to the plasma membrane.

The protein localises to the cell membrane. Its subcellular location is the basolateral cell membrane. The protein resides in the basal cell membrane. Functionally, involved in the renal elimination of endogenous and exogenous organic anions. Functions as organic anion exchanger when the uptake of one molecule of organic anion is coupled with an efflux of one molecule of endogenous dicarboxylic acid (glutarate, ketoglutarate, etc). Mediates the sodium-independent uptake of p-aminohippurate (PAH), 2,3-dimercapto-1-propanesulfonic acid (DMPS), cidofovir, adefovir, 9-(2-phosphonylmethoxyethyl) guanine (PMEG), 9-(2-phosphonylmethoxyethyl) diaminopurine (PMEDAP), ochratoxin (OTA), acyclovir (ACV), 3'-azido-3-'deoxythymidine (AZT), cimetidine (CMD), 2,4-dichloro-phenoxyacetate (2,4-D), hippurate (HA), indoleacetate (IA), indoxyl sulfate (IS), 3-carboxy-4-methyl-5-propyl-2-furanpropionate (CMPF) and edaravone sulfate. Mediates the sodium-independent uptake of p-aminohippurate (PAH). PAH uptake is inhibited by p-chloromercuribenzenesulphonate (PCMBS), diethyl pyrocarbonate (DEPC), indomethacin, sulindac, diclofenac, carprofen, okadaic acid, benzothiazolylcysteine (BTC), S-chlorotrifluoroethylcysteine (CTFC), cysteine S-conjugates S-dichlorovinylcysteine (DCVC), furosemide, steviol, phorbol 12-myristate 13-acetate (PMA), calcium ionophore A23187, benzylpenicillin, bumetamide, losartan, probenecid, phenol red, urate, glutarate and alpha-ketoglutarate. PAH uptake is inhibited by glutarate. This is Solute carrier family 22 member 6 (SLC22A6) from Pseudopleuronectes americanus (Winter flounder).